The chain runs to 150 residues: Large ribosomal subunit protein bL9 (150 aa).

The protein belongs to the bacterial ribosomal protein bL9 family.

Its function is as follows. Binds to the 23S rRNA. The sequence is that of Large ribosomal subunit protein bL9 from Shewanella woodyi (strain ATCC 51908 / MS32).